Consider the following 426-residue polypeptide: Interferon regulatory factor 8 (426 aa).

The IRF tryptophan pentad repeat DNA-binding region spans 7 to 114 (GRRLRQWLIE…EPYKVYRIVP (108 aa)).

Belongs to the IRF family. As to quaternary structure, interacts (via C-terminus) with TRIM21 (via C-terminus). Interacts with the BATF-JUNB heterodimer. Interacts with BATF (via bZIP domain); the interaction is direct. Interacts with COPS2. Interacts with SPI1. In terms of processing, ubiquitinated. Ubiquitination by TRIM21 in macrophages, a process that is strongly increased upon interferon gamma stimulation, leds to the enhanced transcriptional activity of target cytokine genes. Ubiquitination leads to its degradation by the proteasome. Post-translationally, sumoylated with SUMO3. Desumoylated by SENP1. In terms of tissue distribution, predominantly expressed in lymphoid tissues.

The protein localises to the nucleus. It localises to the cytoplasm. Its function is as follows. Transcription factor that specifically binds to the upstream regulatory region of type I interferon (IFN) and IFN-inducible MHC class I genes (the interferon consensus sequence (ICS)). Can both act as a transcriptional activator or repressor. Plays a negative regulatory role in cells of the immune system. Involved in CD8(+) dendritic cell differentiation by forming a complex with the BATF-JUNB heterodimer in immune cells, leading to recognition of AICE sequence (5'-TGAnTCA/GAAA-3'), an immune-specific regulatory element, followed by cooperative binding of BATF and IRF8 and activation of genes. Required for the development of plasmacytoid dendritic cells (pDCs), which produce most of the type I IFN in response to viral infection. Positively regulates macroautophagy in dendritic cells. Acts as a transcriptional repressor of osteoclast differentiation factors such as NFATC1 and EEIG1. This chain is Interferon regulatory factor 8, found in Homo sapiens (Human).